Reading from the N-terminus, the 331-residue chain is Serpentine receptor class alpha-1 (331 aa).

The next 7 membrane-spanning stretches (helical) occupy residues 22-42, 57-77, 104-124, 143-163, 189-209, 238-258, and 274-294; these read FAVF…VIAV, IILV…AIIS, YTEV…GILI, VGII…QIII, FLFI…AVMF, ICVV…GVLI, and LITW…ILIF.

Belongs to the nematode receptor-like protein sra family.

It localises to the membrane. In Caenorhabditis elegans, this protein is Serpentine receptor class alpha-1 (sra-1).